Reading from the N-terminus, the 532-residue chain is 2,3-bisphosphoglycerate-independent phosphoglycerate mutase (532 aa).

Mn(2+)-binding residues include Asp-15 and Ser-65. The active-site Phosphoserine intermediate is the Ser-65. Substrate-binding positions include His-126, 156–157 (RD), Arg-188, Arg-194, 258–261 (RPDR), and Lys-331. 5 residues coordinate Mn(2+): Asp-398, His-402, Asp-439, His-440, and His-457.

It belongs to the BPG-independent phosphoglycerate mutase family. As to quaternary structure, monomer. Mn(2+) serves as cofactor.

The enzyme catalyses (2R)-2-phosphoglycerate = (2R)-3-phosphoglycerate. It functions in the pathway carbohydrate degradation; glycolysis; pyruvate from D-glyceraldehyde 3-phosphate: step 3/5. In terms of biological role, catalyzes the interconversion of 2-phosphoglycerate and 3-phosphoglycerate. This is 2,3-bisphosphoglycerate-independent phosphoglycerate mutase from Synechococcus elongatus (strain ATCC 33912 / PCC 7942 / FACHB-805) (Anacystis nidulans R2).